The sequence spans 210 residues: Pyridoxine/pyridoxamine 5'-phosphate oxidase (210 aa).

Residues 7–10 (RQSY) and Lys65 contribute to the substrate site. FMN is bound by residues 60-65 (RIVLIK), 75-76 (FT), Arg81, Lys82, and Gln104. Tyr122, Arg126, and Ser130 together coordinate substrate. FMN contacts are provided by residues 139 to 140 (QS) and Trp182. 188 to 190 (RLH) is a binding site for substrate. FMN is bound at residue Arg192.

The protein belongs to the pyridoxamine 5'-phosphate oxidase family. As to quaternary structure, homodimer. FMN is required as a cofactor.

The enzyme catalyses pyridoxamine 5'-phosphate + O2 + H2O = pyridoxal 5'-phosphate + H2O2 + NH4(+). It catalyses the reaction pyridoxine 5'-phosphate + O2 = pyridoxal 5'-phosphate + H2O2. It participates in cofactor metabolism; pyridoxal 5'-phosphate salvage; pyridoxal 5'-phosphate from pyridoxamine 5'-phosphate: step 1/1. It functions in the pathway cofactor metabolism; pyridoxal 5'-phosphate salvage; pyridoxal 5'-phosphate from pyridoxine 5'-phosphate: step 1/1. Its function is as follows. Catalyzes the oxidation of either pyridoxine 5'-phosphate (PNP) or pyridoxamine 5'-phosphate (PMP) into pyridoxal 5'-phosphate (PLP). The polypeptide is Pyridoxine/pyridoxamine 5'-phosphate oxidase (Bordetella avium (strain 197N)).